A 400-amino-acid chain; its full sequence is MSSKLVLVLNCGSSSLKFAIIDATNGEEHISGLAECFHLPEARIKWKVDGGKQEAALGAGAAHSEALNFIVNTILAQKPALSAQLTAIGHRIVHGGEKFTSSVIVTEDVIQGIKDSIPFAPLHNPAHLIGIAEALKSFPNLADKNVAVFDTAFHQTMPEESYLYALPYSLYKDHGIRRYGAHGTSHFYVSQEAAKILNKPLEELNVITCHLGNGGSVTAVRNGKCVDTSMGLTPLEGLVMGTRSGDLDPAIIFHLHDAMGMSVDQINTLLTKESGLLGLTEVTSDCRYVEDNYATKADAKRAMDVFCHRLAKYIGSYTALMDGRLDAVVFTGGIGENAAMVRELTLDKLGLLGFEIDHERNMAARFGKSGTITKDSSRLALVIPTNEELVIAQDAARLTA.

Mg(2+) is bound at residue Asn10. Residue Lys17 participates in ATP binding. Residue Arg91 participates in substrate binding. Asp150 acts as the Proton donor/acceptor in catalysis. ATP is bound by residues 210–214 (HLGNG), 285–287 (DCR), and 333–337 (GIGEN). Glu387 is a Mg(2+) binding site.

Belongs to the acetokinase family. In terms of assembly, homodimer. Requires Mg(2+) as cofactor. Mn(2+) is required as a cofactor.

It localises to the cytoplasm. It catalyses the reaction acetate + ATP = acetyl phosphate + ADP. It functions in the pathway metabolic intermediate biosynthesis; acetyl-CoA biosynthesis; acetyl-CoA from acetate: step 1/2. In terms of biological role, catalyzes the formation of acetyl phosphate from acetate and ATP. Can also catalyze the reverse reaction. The polypeptide is Acetate kinase (Yersinia pestis bv. Antiqua (strain Antiqua)).